The following is a 488-amino-acid chain: Bifunctional protein NifU/MnmA (488 aa).

The nifU-like protein stretch occupies residues 1–130 (MPERYGPRVI…DYWSRQGDAL (130 aa)). A tRNA-specific 2-thiouridylase MnmA region spans residues 143–488 (RRGVVAAMSG…GGGIIARRDA (346 aa)). ATP-binding positions include 149-156 (AMSGGVDS) and Phe-175. The Nucleophile role is filled by Cys-240. A disulfide bond links Cys-240 and Cys-333. ATP is bound at residue Gly-264. Positions 283-285 (KDQ) are interaction with tRNA. Cys-333 acts as the Cysteine persulfide intermediate in catalysis. Residues 433-434 (RY) are interaction with tRNA.

It in the N-terminal section; belongs to the NifU family. In the C-terminal section; belongs to the MnmA/TRMU family.

The protein resides in the cytoplasm. It catalyses the reaction S-sulfanyl-L-cysteinyl-[protein] + uridine(34) in tRNA + AH2 + ATP = 2-thiouridine(34) in tRNA + L-cysteinyl-[protein] + A + AMP + diphosphate + H(+). Its function is as follows. May be involved in the formation or repair of [Fe-S] clusters present in iron-sulfur proteins. Catalyzes the 2-thiolation of uridine at the wobble position (U34) of tRNA, leading to the formation of s(2)U34. The chain is Bifunctional protein NifU/MnmA (nifU/mnmA) from Rubrobacter xylanophilus (strain DSM 9941 / JCM 11954 / NBRC 16129 / PRD-1).